Consider the following 83-residue polypeptide: Prolactin-releasing peptide (83 aa).

Residues 1-21 form the signal peptide; it reads MALKTWLLCLLLLSLVLPGAS. Phenylalanine 52 is subject to Phenylalanine amide. Positions 57-83 are excised as a propeptide; the sequence is ATPRDVTGLGQLSCLPLDGRTKFSQRG.

Widely expressed, with highest levels in medulla oblongata and hypothalamus.

It is found in the secreted. Its function is as follows. Stimulates prolactin (PRL) release and regulates the expression of prolactin through its receptor GPR10. May stimulate lactotrophs directly to secrete PRL. This chain is Prolactin-releasing peptide (Prlh), found in Rattus norvegicus (Rat).